The following is a 1335-amino-acid chain: Probable serine/threonine-protein kinase ndrC (1335 aa).

4 disordered regions span residues 1 to 70 (MSRK…KKGS), 85 to 158 (VDTH…LIPS), 276 to 447 (LPPP…SPLN), and 462 to 603 (TTTT…NNNK). Polar residues predominate over residues 8–17 (NRSSSSNSIE). Low complexity predominate over residues 27 to 41 (SNISNSSNINCNNSS). Positions 55–70 (RSKHSSPIHSLKKKGS) are enriched in basic residues. Over residues 89–117 (SSSNSNNNSSSNNNNNNNNHNINSSSESS) the composition is skewed to low complexity. Residues 118–132 (TPTTPRSSFTPQVTM) are compositionally biased toward polar residues. Residues 133-153 (NSNQSSGNNSPQLSSRSSSQS) are compositionally biased toward low complexity. Residues 276–288 (LPPPSQQQLPPPQ) show a composition bias toward pro residues. Low complexity-rich tracts occupy residues 289–331 (SHQQ…TPQS), 345–368 (NQQQ…SPNK), 382–396 (SPSP…SPSS), 412–424 (PTPL…SPSS), 437–447 (PSSFSGGSPLN), and 462–484 (TTTT…TTIS). The segment covering 485–497 (NPNYTQNLPTTPL) has biased composition (polar residues). Low complexity predominate over residues 498 to 507 (SNSSSNNNNN). Polar residues predominate over residues 508-528 (GSFITLQDTTNNKSIINNNRE). Residues 540-566 (SSGSSNTTSSTTNTTTPSSSSLTTSSG) show a composition bias toward low complexity. Basic and acidic residues predominate over residues 567-581 (KESRDRDSKDKEKDL). Positions 586–602 (NNNNNNNNNNNNNNNNN) are enriched in low complexity. Residues 586–613 (NNNNNNNNNNNNNNNNNKVEKEKENYCK) are a coiled coil. Residues 718-1019 (FKILTQIGKG…KQDFKNHPFF (302 aa)) form the Protein kinase domain. Residues 724–732 (IGKGGFGQV) and Lys-747 contribute to the ATP site. Asp-840 functions as the Proton acceptor in the catalytic mechanism. An AGC-kinase C-terminal domain is found at 1020-1106 (KNHNWDEIVN…RKSSALSLSM (87 aa)). Residues 1239-1284 (SQSQPSLANQLQSSSSSPSPSLQSQSQSPSLQSSSKSTPNLSSSLL) are compositionally biased toward low complexity. Residues 1239-1313 (SQSQPSLANQ…IKKENESEEI (75 aa)) form a disordered region. Positions 1287-1313 (PVKEELEYKNQTENEVEIKKENESEEI) are enriched in basic and acidic residues. Residues 1289–1325 (KEELEYKNQTENEVEIKKENESEEIQSLRDQLKEIII) are a coiled coil.

Belongs to the protein kinase superfamily. AGC Ser/Thr protein kinase family.

It catalyses the reaction L-seryl-[protein] + ATP = O-phospho-L-seryl-[protein] + ADP + H(+). The enzyme catalyses L-threonyl-[protein] + ATP = O-phospho-L-threonyl-[protein] + ADP + H(+). This is Probable serine/threonine-protein kinase ndrC (ndrC) from Dictyostelium discoideum (Social amoeba).